The chain runs to 83 residues: Acylphosphatase (83 aa).

The Acylphosphatase-like domain occupies 1 to 83 (MIEGRVQRVG…TGDDWFEVRY (83 aa)). Catalysis depends on residues arginine 12 and asparagine 30.

It belongs to the acylphosphatase family.

The catalysed reaction is an acyl phosphate + H2O = a carboxylate + phosphate + H(+). This chain is Acylphosphatase (acyP), found in Synechococcus sp. (strain CC9605).